A 370-amino-acid chain; its full sequence is Dual-specificity RNA methyltransferase RlmN (370 aa).

Glu93 (proton acceptor) is an active-site residue. The Radical SAM core domain occupies 99-331 (DRKRGTLCVS…TRVRRTRGDD (233 aa)). A disulfide bridge connects residues Cys106 and Cys336. Residues Cys113, Cys117, and Cys120 each contribute to the [4Fe-4S] cluster site. Residues 162–163 (GE), Ser194, 216–218 (SLH), and Asn293 each bind S-adenosyl-L-methionine. Cys336 serves as the catalytic S-methylcysteine intermediate.

The protein belongs to the radical SAM superfamily. RlmN family. The cofactor is [4Fe-4S] cluster.

It localises to the cytoplasm. The catalysed reaction is adenosine(2503) in 23S rRNA + 2 reduced [2Fe-2S]-[ferredoxin] + 2 S-adenosyl-L-methionine = 2-methyladenosine(2503) in 23S rRNA + 5'-deoxyadenosine + L-methionine + 2 oxidized [2Fe-2S]-[ferredoxin] + S-adenosyl-L-homocysteine. It catalyses the reaction adenosine(37) in tRNA + 2 reduced [2Fe-2S]-[ferredoxin] + 2 S-adenosyl-L-methionine = 2-methyladenosine(37) in tRNA + 5'-deoxyadenosine + L-methionine + 2 oxidized [2Fe-2S]-[ferredoxin] + S-adenosyl-L-homocysteine. Specifically methylates position 2 of adenine 2503 in 23S rRNA and position 2 of adenine 37 in tRNAs. m2A2503 modification seems to play a crucial role in the proofreading step occurring at the peptidyl transferase center and thus would serve to optimize ribosomal fidelity. In Coxiella burnetii (strain CbuK_Q154) (Coxiella burnetii (strain Q154)), this protein is Dual-specificity RNA methyltransferase RlmN.